A 303-amino-acid chain; its full sequence is Small ribosomal subunit protein bS1m (303 aa).

The residue at position 2 (Ser2) is an N-acetylserine. A mitochondrion; not cleaved-targeting transit peptide spans 2–13 (SFAQILRGSRAM).

This sequence belongs to the bacterial ribosomal protein bS1 family. In terms of assembly, component of the mitochondrial small ribosomal subunit (mt-SSU). Mature yeast 74S mitochondrial ribosomes consist of a small (37S) and a large (54S) subunit. The 37S small subunit contains a 15S ribosomal RNA (15S mt-rRNA) and at least 32 different proteins. The 54S large subunit contains a 21S rRNA (21S mt-rRNA) and at least 45 different proteins. This subunit is mutually exclusive with mug178/small ribosomal subunit protein L51-b.

The protein resides in the mitochondrion. Functionally, component of the mitochondrial ribosome (mitoribosome), a dedicated translation machinery responsible for the synthesis of mitochondrial genome-encoded proteins, including at least some of the essential transmembrane subunits of the mitochondrial respiratory chain. The mitoribosomes are attached to the mitochondrial inner membrane and translation products are cotranslationally integrated into the membrane. bS1m functionally interacts with the 5'-UTR of mitochondrial mRNAs. Plays an essential role in mitochondrial translation. The protein is Small ribosomal subunit protein bS1m (mrp51) of Schizosaccharomyces pombe (strain 972 / ATCC 24843) (Fission yeast).